Consider the following 449-residue polypeptide: Probable glycine dehydrogenase (decarboxylating) subunit 1 (449 aa).

The protein belongs to the GcvP family. N-terminal subunit subfamily. As to quaternary structure, the glycine cleavage system is composed of four proteins: P, T, L and H. In this organism, the P 'protein' is a heterodimer of two subunits.

The enzyme catalyses N(6)-[(R)-lipoyl]-L-lysyl-[glycine-cleavage complex H protein] + glycine + H(+) = N(6)-[(R)-S(8)-aminomethyldihydrolipoyl]-L-lysyl-[glycine-cleavage complex H protein] + CO2. In terms of biological role, the glycine cleavage system catalyzes the degradation of glycine. The P protein binds the alpha-amino group of glycine through its pyridoxal phosphate cofactor; CO(2) is released and the remaining methylamine moiety is then transferred to the lipoamide cofactor of the H protein. The polypeptide is Probable glycine dehydrogenase (decarboxylating) subunit 1 (Pyrococcus horikoshii (strain ATCC 700860 / DSM 12428 / JCM 9974 / NBRC 100139 / OT-3)).